A 108-amino-acid polypeptide reads, in one-letter code: LALLLVALAVAYAVPDPRGVIINLEAGEICMNSAQCKSECCHRESSLSLARCAAKASENSECSAWTLYGVYYKCPCERGLTCQVDKTLVGSIMNTNFGICFDAARSEE.

A signal peptide spans 1 to 13 (LALLLVALAVAYA). The propeptide at 14 to 18 (VPDPR) is enterostatin, activation peptide. 5 disulfides stabilise this stretch: C30-C41, C36-C52, C40-C74, C62-C82, and C76-C100. W65 is a taurodeoxycholate binding site.

It belongs to the colipase family. As to quaternary structure, forms a 1:1 stoichiometric complex with pancreatic lipase. As to expression, expressed by the pancreas.

The protein localises to the secreted. In terms of biological role, colipase is a cofactor of pancreatic lipase. It allows the lipase to anchor itself to the lipid-water interface. Without colipase the enzyme is washed off by bile salts, which have an inhibitory effect on the lipase. Enterostatin has a biological activity as a satiety signal. This Equus caballus (Horse) protein is Colipase B (CLPS2).